The primary structure comprises 150 residues: Large ribosomal subunit protein bL9 (150 aa).

The protein belongs to the bacterial ribosomal protein bL9 family.

Binds to the 23S rRNA. The polypeptide is Large ribosomal subunit protein bL9 (Paracidovorax citrulli (strain AAC00-1) (Acidovorax citrulli)).